A 349-amino-acid polypeptide reads, in one-letter code: Histidinol-phosphate aminotransferase (349 aa).

The residue at position 210 (Lys210) is an N6-(pyridoxal phosphate)lysine.

Belongs to the class-II pyridoxal-phosphate-dependent aminotransferase family. Histidinol-phosphate aminotransferase subfamily. Homodimer. Pyridoxal 5'-phosphate serves as cofactor.

The enzyme catalyses L-histidinol phosphate + 2-oxoglutarate = 3-(imidazol-4-yl)-2-oxopropyl phosphate + L-glutamate. The protein operates within amino-acid biosynthesis; L-histidine biosynthesis; L-histidine from 5-phospho-alpha-D-ribose 1-diphosphate: step 7/9. The polypeptide is Histidinol-phosphate aminotransferase (Flavobacterium johnsoniae (strain ATCC 17061 / DSM 2064 / JCM 8514 / BCRC 14874 / CCUG 350202 / NBRC 14942 / NCIMB 11054 / UW101) (Cytophaga johnsonae)).